Consider the following 327-residue polypeptide: Acetyl-coenzyme A carboxylase carboxyl transferase subunit beta (327 aa).

In terms of domain architecture, CoA carboxyltransferase N-terminal spans 24 to 293; sequence LWIKCPDTGQ…LTVTTAVEAP (270 aa). The span at 293–311 shows a compositional bias: low complexity; that stretch reads PAEAAAKAEPEATTTEQPG. The interval 293–327 is disordered; it reads PAEAAAKAEPEATTTEQPGAPAPTEPPAQPAAPQA. A compositionally biased stretch (pro residues) spans 312–327; sequence APAPTEPPAQPAAPQA.

The protein belongs to the AccD/PCCB family. Acetyl-CoA carboxylase is a heterohexamer composed of biotin carboxyl carrier protein (AccB), biotin carboxylase (AccC) and two subunits each of ACCase subunit alpha (AccA) and ACCase subunit beta (AccD).

It localises to the cytoplasm. It carries out the reaction N(6)-carboxybiotinyl-L-lysyl-[protein] + acetyl-CoA = N(6)-biotinyl-L-lysyl-[protein] + malonyl-CoA. Its pathway is lipid metabolism; malonyl-CoA biosynthesis; malonyl-CoA from acetyl-CoA: step 1/1. Component of the acetyl coenzyme A carboxylase (ACC) complex. Biotin carboxylase (BC) catalyzes the carboxylation of biotin on its carrier protein (BCCP) and then the CO(2) group is transferred by the transcarboxylase to acetyl-CoA to form malonyl-CoA. In Rhodopseudomonas palustris (strain ATCC BAA-98 / CGA009), this protein is Acetyl-coenzyme A carboxylase carboxyl transferase subunit beta.